Reading from the N-terminus, the 305-residue chain is Aspartate carbamoyltransferase catalytic subunit (305 aa).

Carbamoyl phosphate contacts are provided by arginine 56 and threonine 57. Lysine 84 contacts L-aspartate. Residues arginine 106, histidine 136, and glutamine 139 each contribute to the carbamoyl phosphate site. L-aspartate is bound by residues arginine 169 and arginine 221. Positions 262 and 263 each coordinate carbamoyl phosphate.

This sequence belongs to the aspartate/ornithine carbamoyltransferase superfamily. ATCase family. In terms of assembly, heterododecamer (2C3:3R2) of six catalytic PyrB chains organized as two trimers (C3), and six regulatory PyrI chains organized as three dimers (R2).

It carries out the reaction carbamoyl phosphate + L-aspartate = N-carbamoyl-L-aspartate + phosphate + H(+). It participates in pyrimidine metabolism; UMP biosynthesis via de novo pathway; (S)-dihydroorotate from bicarbonate: step 2/3. In terms of biological role, catalyzes the condensation of carbamoyl phosphate and aspartate to form carbamoyl aspartate and inorganic phosphate, the committed step in the de novo pyrimidine nucleotide biosynthesis pathway. The polypeptide is Aspartate carbamoyltransferase catalytic subunit (Streptococcus sanguinis (strain SK36)).